Here is a 345-residue protein sequence, read N- to C-terminus: MTVIVPIHSPAVAPAPAPERVGVLLVNLGTPDSCDTKGVRIYLREFLSDPRVIENQGLFWKLALNGLILQTRPARKAKDYQKIWNHEKNESPLKTITRAQAHKLATSLSDRGHLVVDWAMRYGNPSMRSRIEAMVAKGCSRLLVVPLYPQYSAATSATVCDQAFRVLSELRAQPTMRVAPPYFRDSAYIDALANSIRSHLASLPFEPEIIVASFHGMPQAYIEKGDPYQAQCIATVDALRERMGLGDNKLLLTFQSRFGFDEWLQPYTDQTIQKLANDGVKRLAVVMPGFASDCLETLEEIAQENAETFLHNGGEHFSAVPCLNDSDGGIAVIRQLVLRELQGWL.

Residues H215 and E296 each coordinate Fe cation.

This sequence belongs to the ferrochelatase family.

Its subcellular location is the cytoplasm. The catalysed reaction is heme b + 2 H(+) = protoporphyrin IX + Fe(2+). The protein operates within porphyrin-containing compound metabolism; protoheme biosynthesis; protoheme from protoporphyrin-IX: step 1/1. Its function is as follows. Catalyzes the ferrous insertion into protoporphyrin IX. The chain is Ferrochelatase from Rhodopseudomonas palustris (strain BisA53).